The sequence spans 217 residues: Probable nicotinate-nucleotide adenylyltransferase (217 aa).

This sequence belongs to the NadD family.

The enzyme catalyses nicotinate beta-D-ribonucleotide + ATP + H(+) = deamido-NAD(+) + diphosphate. It functions in the pathway cofactor biosynthesis; NAD(+) biosynthesis; deamido-NAD(+) from nicotinate D-ribonucleotide: step 1/1. Its function is as follows. Catalyzes the reversible adenylation of nicotinate mononucleotide (NaMN) to nicotinic acid adenine dinucleotide (NaAD). This is Probable nicotinate-nucleotide adenylyltransferase from Baumannia cicadellinicola subsp. Homalodisca coagulata.